Consider the following 4471-residue polypeptide: Dynein axonemal heavy chain 10 (4471 aa).

The stem stretch occupies residues 1 to 1793 (MVPEEVEVEI…NIRQCTGTFG (1793 aa)). Residues 46–65 (TESLGQPLNREDEEMDKEIS) are disordered. 4 coiled-coil regions span residues 203 to 223 (NVQK…GEIK), 602 to 622 (QEVK…EDRK), 1071 to 1106 (KLLN…EDLK), and 1217 to 1245 (VELL…KLFD). N1074 carries an N-linked (GlcNAc...) asparagine glycan. The stretch at 1221-1254 (GVYERELARHEKSRQELANAEKLFDLPITMYPEL) is one TPR 1 repeat. 4 AAA regions span residues 1794–2015 (YGYE…VLVM), 2075–2294 (DAVE…VIVE), 2417–2665 (IHAP…VFNG), and 2765–3014 (EYNE…LRRS). Positions 1832–1839 (GPAGTGKT) match the GPAGTGKT motif motif. Position 1832-1839 (1832-1839 (GPAGTGKT)) interacts with ATP. Residues 1882–1888 (CFDEFNR) carry the CFDEFNR motif motif. ATP-binding positions include 2113–2120 (GPTRGGKS) and 2455–2462 (GESGTSKT). TPR repeat units follow at residues 2736–2769 (MALH…YNES) and 2771–2797 (TKMN…MDRG). Residues 2747-2770 (EDIQDYEAAKALFQEILEEYNESN) are a coiled coil. 2803–2810 (GVGGSGKQ) serves as a coordination point for ATP. A stalk region spans residues 3029–3313 (YSKLLDEKTQ…QKLQEEAEIM (285 aa)). Coiled-coil stretches lie at residues 3045 to 3131 (KRLD…LAEV), 3257 to 3327 (KREK…ISGL), and 3567 to 3638 (ERRE…EKTA). The segment at 3399–3629 (LTDDVEISRW…TKSKATEVSE (231 aa)) is AAA 5. One copy of the TPR 4 repeat lies at 3802–3837 (WQEWYDLDSLEQFPVPLGYDNNITPFQKLLILRCFR). The interval 3845–4062 (VTDYVTVTMG…FQVCMEILNT (218 aa)) is AAA 6. The stretch at 4074–4108 (RIPWGSLKYLIGEVMYGGRAIDSFDRRILTIYMDE) is one TPR 5 repeat. Residues 4235-4260 (LLQELERFNKLVVRMTKSLAELQRAL) adopt a coiled-coil conformation.

The protein belongs to the dynein heavy chain family. As to quaternary structure, consists of at least two heavy chains and a number of intermediate and light chains. As to expression, expressed primarily in trachea and testis, 2 tissues containing axonemal structures. Also expressed in brain but not in adult heart.

The protein localises to the cytoplasm. It is found in the cytoskeleton. It localises to the cilium axoneme. Force generating protein of respiratory cilia. Produces force towards the minus ends of microtubules. Dynein has ATPase activity; the force-producing power stroke is thought to occur on release of ADP. Involved in sperm motility; implicated in sperm flagellar assembly. Probable inner arm dynein heavy chain. In Homo sapiens (Human), this protein is Dynein axonemal heavy chain 10 (DNAH10).